The chain runs to 180 residues: MKMLLLLCLGLTLVCVHAEEASSTGRNFNVEKINGEWHTIILASDKREKIEDNGNFRLFLEQIHVLEKSLVLKFHTVRDEECSELSMVADKTEKAGEYSVTYDGFNTFTIPKTDYDNFLMAHLINEKDGETFQLMGLYGREPDLSSDIKERFAKLCEEHGILRENIIDLSNANRCLQARE.

Positions M1 to A18 are cleaved as a signal peptide. C82 and C175 are joined by a disulfide.

Belongs to the calycin superfamily. Lipocalin family. In terms of tissue distribution, abundant in the urine of adult male mice but absent from that of females.

It is found in the secreted. In terms of biological role, binds pheromones that are released from drying urine of males. These pheromones affect the sexual behavior of females. In Mus musculus (Mouse), this protein is Major urinary protein 2 (Mup2).